Consider the following 123-residue polypeptide: Protein Wnt-7a (123 aa).

Residue Ser-1 is the site of O-palmitoleoyl serine; by PORCN attachment. Positions Val-33–Thr-61 are disordered linker. Cys-89 and Cys-104 are oxidised to a cystine. A glycan (N-linked (GlcNAc...) asparagine) is linked at Asn-90.

Belongs to the Wnt family. Forms a soluble 1:1 complex with AFM; this prevents oligomerization and is required for prolonged biological activity. The complex with AFM may represent the physiological form in body fluids. Interacts with FZD5. Interacts with PORCN. Palmitoleoylation is required for efficient binding to frizzled receptors. Depalmitoleoylation leads to Wnt signaling pathway inhibition.

It is found in the secreted. It localises to the extracellular space. Its subcellular location is the extracellular matrix. In terms of biological role, ligand for members of the frizzled family of seven transmembrane receptors that functions in the canonical Wnt/beta-catenin signaling pathway. Plays an important role in embryonic development, including dorsal versus ventral patterning during limb development, skeleton development and urogenital tract development. Required for central nervous system (CNS) angiogenesis and blood-brain barrier regulation. The polypeptide is Protein Wnt-7a (WNT7A) (Meleagris gallopavo (Wild turkey)).